We begin with the raw amino-acid sequence, 346 residues long: 3',5'-cyclic-nucleotide phosphodiesterase (346 aa).

Belongs to the cyclic nucleotide phosphodiesterase class-II family.

It catalyses the reaction a nucleoside 3',5'-cyclic phosphate + H2O = a nucleoside 5'-phosphate + H(+). This is 3',5'-cyclic-nucleotide phosphodiesterase (cgs2) from Schizosaccharomyces pombe (strain 972 / ATCC 24843) (Fission yeast).